We begin with the raw amino-acid sequence, 331 residues long: Pantothenate kinase (331 aa).

109–116 contributes to the ATP binding site; sequence GSVAVGKS.

It belongs to the prokaryotic pantothenate kinase family.

Its subcellular location is the cytoplasm. The enzyme catalyses (R)-pantothenate + ATP = (R)-4'-phosphopantothenate + ADP + H(+). It functions in the pathway cofactor biosynthesis; coenzyme A biosynthesis; CoA from (R)-pantothenate: step 1/5. The protein is Pantothenate kinase of Rhizobium rhizogenes (strain K84 / ATCC BAA-868) (Agrobacterium radiobacter).